The following is a 362-amino-acid chain: 3-isopropylmalate dehydrogenase (362 aa).

NAD(+) is bound at residue 77–88; sequence GPKWGTGAVRPE. Residues Arg-95, Arg-105, Arg-134, and Asp-223 each coordinate substrate. The Mg(2+) site is built by Asp-223, Asp-248, and Asp-252. 287–298 is an NAD(+) binding site; it reads GSAPDLPANKVN.

Belongs to the isocitrate and isopropylmalate dehydrogenases family. Homodimer. Mg(2+) is required as a cofactor. It depends on Mn(2+) as a cofactor.

The protein resides in the cytoplasm. The catalysed reaction is (2R,3S)-3-isopropylmalate + NAD(+) = 4-methyl-2-oxopentanoate + CO2 + NADH. It participates in amino-acid biosynthesis; L-leucine biosynthesis; L-leucine from 3-methyl-2-oxobutanoate: step 3/4. In terms of biological role, catalyzes the oxidation of 3-carboxy-2-hydroxy-4-methylpentanoate (3-isopropylmalate) to 3-carboxy-4-methyl-2-oxopentanoate. The product decarboxylates to 4-methyl-2 oxopentanoate. The chain is 3-isopropylmalate dehydrogenase (LEU2) from Kluyveromyces lactis (strain ATCC 8585 / CBS 2359 / DSM 70799 / NBRC 1267 / NRRL Y-1140 / WM37) (Yeast).